A 221-amino-acid chain; its full sequence is Putative 5'(3')-deoxyribonucleotidase R824 (221 aa).

Asp-16 and Asp-18 together coordinate Mg(2+). The active-site Nucleophile is the Asp-18. The phosphate site is built by Asp-18, Ser-103, and Lys-138. Asp-149 contributes to the Mg(2+) binding site.

This sequence belongs to the 5'(3')-deoxyribonucleotidase family. Requires Mg(2+) as cofactor.

Functionally, dephosphorylates the 5' and 2'(3')-phosphates of deoxyribonucleotides. This Acanthamoeba polyphaga mimivirus (APMV) protein is Putative 5'(3')-deoxyribonucleotidase R824.